The following is a 358-amino-acid chain: Molybdenum import ATP-binding protein ModC 2 (358 aa).

The 234-residue stretch at 1–234 (MPEQGIEAQL…PRLPLNHPDE (234 aa)) folds into the ABC transporter domain. 35-42 (GRSGSGKT) contributes to the ATP binding site. Residues 293-358 (NSSILNILRV…AQIKSVALME (66 aa)) enclose the Mop domain.

The protein belongs to the ABC transporter superfamily. Molybdate importer (TC 3.A.1.8) family. As to quaternary structure, the complex is composed of two ATP-binding proteins (ModC), two transmembrane proteins (ModB) and a solute-binding protein (ModA).

It localises to the cell inner membrane. It catalyses the reaction molybdate(out) + ATP + H2O = molybdate(in) + ADP + phosphate + H(+). In terms of biological role, part of the ABC transporter complex ModABC involved in molybdenum import. Responsible for energy coupling to the transport system. The chain is Molybdenum import ATP-binding protein ModC 2 from Azotobacter vinelandii.